Reading from the N-terminus, the 192-residue chain is Fe/S biogenesis protein NfuA (192 aa).

2 residues coordinate [4Fe-4S] cluster: C149 and C152.

Belongs to the NfuA family. As to quaternary structure, homodimer. The cofactor is [4Fe-4S] cluster.

Involved in iron-sulfur cluster biogenesis. Binds a 4Fe-4S cluster, can transfer this cluster to apoproteins, and thereby intervenes in the maturation of Fe/S proteins. Could also act as a scaffold/chaperone for damaged Fe/S proteins. The protein is Fe/S biogenesis protein NfuA of Shewanella baltica (strain OS223).